A 187-amino-acid chain; its full sequence is MQDKNNLCWLDMEMTGLNPETDRIIEVAMIITDSDLNVLAQSEVYAVHQSDDVLNKMDEWNTATHGRTGLTQRVRESSHTEAEVEQKLLDFMSEWVPGRATPMCGNSIHQDRRFMVKYMPKLENYFHYRNLDVSTLKELAKRWNPPVAKSVVKRGSHKALDDILESIEEMRHYREHFLISAPRAEAQ.

One can recognise an Exonuclease domain in the interval 7–170; the sequence is LCWLDMEMTG…DDILESIEEM (164 aa). Residue Tyr-128 is part of the active site.

The protein belongs to the oligoribonuclease family.

Its subcellular location is the cytoplasm. Its function is as follows. 3'-to-5' exoribonuclease specific for small oligoribonucleotides. The chain is Oligoribonuclease from Neisseria meningitidis serogroup B (strain ATCC BAA-335 / MC58).